Reading from the N-terminus, the 260-residue chain is Exosome complex component Rrp42 (260 aa).

Belongs to the RNase PH family. Rrp42 subfamily. Component of the archaeal exosome complex. Forms a hexameric ring-like arrangement composed of 3 Rrp41-Rrp42 heterodimers. The hexameric ring associates with a trimer of Rrp4 and/or Csl4 subunits.

It is found in the cytoplasm. In terms of biological role, non-catalytic component of the exosome, which is a complex involved in RNA degradation. Contributes to the structuring of the Rrp41 active site. The protein is Exosome complex component Rrp42 of Methanocella arvoryzae (strain DSM 22066 / NBRC 105507 / MRE50).